The following is a 299-amino-acid chain: MLDKSRLRIAMQKSGRLSKESQKLLEQCGIKINLQQQQLLAFAENMTIDIMRVRDDDIPGLIMDGVVDLGIIGENVLEEALLTRQSQGDNPCYVTLRRLDFGDCRLSMALPMDKPWNGPKCLQGKRIATSYPHLLKQYLDKLGINFKSCLLNGSVEVAPRAGLADAICDLVSTGATLEANGLREVEVIYRSKACLIQRSGNLSKTKQSLIDKLMIRIQGVIQARESKYIMLHAPAERLEEIINLLPGAESPTVLPLAGNQHRVAIYMVSNEALFWETMENLKNLGASSILVLPIEKMME.

The protein belongs to the ATP phosphoribosyltransferase family. Long subfamily. In terms of assembly, equilibrium between an active dimeric form, an inactive hexameric form and higher aggregates. Interconversion between the various forms is largely reversible and is influenced by the natural substrates and inhibitors of the enzyme. Mg(2+) is required as a cofactor.

It localises to the cytoplasm. The enzyme catalyses 1-(5-phospho-beta-D-ribosyl)-ATP + diphosphate = 5-phospho-alpha-D-ribose 1-diphosphate + ATP. Its pathway is amino-acid biosynthesis; L-histidine biosynthesis; L-histidine from 5-phospho-alpha-D-ribose 1-diphosphate: step 1/9. Feedback inhibited by histidine. Functionally, catalyzes the condensation of ATP and 5-phosphoribose 1-diphosphate to form N'-(5'-phosphoribosyl)-ATP (PR-ATP). Has a crucial role in the pathway because the rate of histidine biosynthesis seems to be controlled primarily by regulation of HisG enzymatic activity. This Blochmanniella floridana protein is ATP phosphoribosyltransferase.